We begin with the raw amino-acid sequence, 1105 residues long: Serine/threonine-protein kinase 4 homolog B (1105 aa).

The region spanning 23–274 (FDLIECLGRG…AKDLLKHSFF (252 aa)) is the Protein kinase domain. Residues 29–37 (LGRGSFGSV) and Lys52 each bind ATP. The Proton acceptor role is filled by Asp142. Disordered stretches follow at residues 348–396 (STQI…TKNN), 411–482 (SSSA…RQPA), and 495–541 (PSFG…SLPL). Composition is skewed to low complexity over residues 358 to 396 (QAQQ…TKNN) and 411 to 437 (SSSA…TTTN). A compositionally biased stretch (polar residues) spans 438-458 (DYHTGNGRTSSSSPQFGLQHQ). Low complexity-rich tracts occupy residues 459–473 (NSSN…TVPS) and 513–541 (PIGS…SLPL). The calpain-like cysteine protease-like stretch occupies residues 516-1105 (SPITKRPTPT…SEFDLDFYNN (590 aa)). Domain III regions lie at residues 641–668 (EVSA…EGSF), 791–830 (VHTQ…QGSI), 836–972 (SEQI…NVIQ), and 1076–1103 (VVIP…LDFY).

This sequence in the N-terminal section; belongs to the protein kinase superfamily. STE Ser/Thr protein kinase family. STE20 subfamily. It in the C-terminal section; belongs to the peptidase C2 family. Mn(2+) serves as cofactor.

It carries out the reaction L-seryl-[protein] + ATP = O-phospho-L-seryl-[protein] + ADP + H(+). It catalyses the reaction L-threonyl-[protein] + ATP = O-phospho-L-threonyl-[protein] + ADP + H(+). Probable serine/threonine-protein kinase. The protein is Serine/threonine-protein kinase 4 homolog B (krsB) of Dictyostelium discoideum (Social amoeba).